The following is a 324-amino-acid chain: MKAIVIGILASLFFAVTFILNRAMELSGGSWLWSSSLRFIFMVPFLCLIVIMRGTFTPLLLEMRKKPFYWIKWSFVGFVLFYAPITFAAAYGPGWLIAGTWQITIVAGVLLSPLFYVKQDMPGGPQLIRQKIPLVSLGTSVIILIGAALIQLQHAESLSGRMLLFSVLPVVIAAFAYPLGNRRMLEEYGGRLDTFQRVLGMTLASLPFWLILAAYGWWSDGLPTASQTVQSFIVAVSSGIIATVLFFWATDMVRDNPQKLAAVEATQSGEVIFALLGEIVLLSGVFPSLLSFAGLFIIIAGMMLHTFASQPRKPKKKAQSNLTA.

The next 8 membrane-spanning stretches (helical) occupy residues 5-24, 39-61, 68-90, 95-117, 130-152, 162-179, 199-218, and 228-250; these read VIGI…NRAM, FIFM…PLLL, FYWI…FAAA, WLIA…LFYV, QKIP…LIQL, MLLF…AYPL, LGMT…YGWW, and TVQS…FWAT.

The protein localises to the cell membrane. This is an uncharacterized protein from Bacillus subtilis (strain 168).